The primary structure comprises 156 residues: Endoribonuclease YbeY (156 aa).

Zn(2+)-binding residues include His-122, His-126, and His-132.

This sequence belongs to the endoribonuclease YbeY family. Requires Zn(2+) as cofactor.

The protein resides in the cytoplasm. Functionally, single strand-specific metallo-endoribonuclease involved in late-stage 70S ribosome quality control and in maturation of the 3' terminus of the 16S rRNA. The protein is Endoribonuclease YbeY of Bacillus mycoides (strain KBAB4) (Bacillus weihenstephanensis).